Here is a 445-residue protein sequence, read N- to C-terminus: CBL-interacting serine/threonine-protein kinase 8 (445 aa).

Positions 9–262 (YELGRTIGEG…IAEIRKDEWF (254 aa)) constitute a Protein kinase domain. ATP-binding positions include 15–23 (IGEGTFAKV) and K38. D132 functions as the Proton acceptor in the catalytic mechanism. The interval 150-177 (DFGLSALPEQGVTILKTTCGTPNYVAPE) is activation loop. S154 is modified (phosphoserine). T166 is subject to Phosphothreonine. The region spanning 302-326 (TGPLTLNAFDLIILSQGLNLATLFD) is the NAF domain. The PPI stretch occupies residues 333–362 (KHQTRFISHKPANVVLSSMEVVSQSMGFKT).

This sequence belongs to the protein kinase superfamily. CAMK Ser/Thr protein kinase family. SNF1 subfamily. As to quaternary structure, interacts with CBL1 and CBL9. Mn(2+) is required as a cofactor. Mostly expressed in roots, and, to a lower extent, in leaves, stems, flowers, and siliques.

It catalyses the reaction L-seryl-[protein] + ATP = O-phospho-L-seryl-[protein] + ADP + H(+). It carries out the reaction L-threonyl-[protein] + ATP = O-phospho-L-threonyl-[protein] + ADP + H(+). In terms of biological role, CIPK serine-threonine protein kinases interact with CBL proteins. Binding of a CBL protein to the regulatory NAF domain of CIPK protein lead to the activation of the kinase in a calcium-dependent manner. The polypeptide is CBL-interacting serine/threonine-protein kinase 8 (CIPK8) (Arabidopsis thaliana (Mouse-ear cress)).